The following is a 428-amino-acid chain: ATP-dependent RNA helicase RhlB (428 aa).

The Q motif motif lies at 9–37 (QKFSDFALHPLVLEALEKKGFQHCTPIQA). In terms of domain architecture, Helicase ATP-binding spans 40–219 (LPLTLSGRDV…FEQMNNAEYV (180 aa)). 53–60 (AQTGTGKT) contributes to the ATP binding site. The DEAD box motif lies at 165-168 (DEAD). Residues 245–390 (RLLQTLIEEE…VSKYNSDALL (146 aa)) enclose the Helicase C-terminal domain. A disordered region spans residues 392–428 (DLPAPKRLARPRGGNGPRRNSAPRRGGAPRNNRKRSG). A compositionally biased stretch (low complexity) spans 408–421 (PRRNSAPRRGGAPR).

Belongs to the DEAD box helicase family. RhlB subfamily. Component of the RNA degradosome, which is a multiprotein complex involved in RNA processing and mRNA degradation.

The protein localises to the cytoplasm. It carries out the reaction ATP + H2O = ADP + phosphate + H(+). In terms of biological role, DEAD-box RNA helicase involved in RNA degradation. Has RNA-dependent ATPase activity and unwinds double-stranded RNA. In Serratia proteamaculans (strain 568), this protein is ATP-dependent RNA helicase RhlB.